A 544-amino-acid polypeptide reads, in one-letter code: Chitin-inducible gibberellin-responsive protein 2 (544 aa).

The interval M1–P123 is disordered. 3 stretches are compositionally biased toward polar residues: residues N15–P30, S63–S74, and P86–Q101. The 380-residue stretch at R165 to H544 folds into the GRAS domain. The leucine repeat I (LRI) stretch occupies residues G172–S232. Positions M251–G316 are VHIID. The VHIID motif lies at I282–D286. The segment at L332 to H364 is leucine repeat II (LRII). The PFYRE stretch occupies residues L373–N467. Residues A470–H544 form an SAW region.

Belongs to the GRAS family.

The protein resides in the nucleus. May play a regulatory role in the early step of oligosaccharide elicitor response, downstream of the membrane-associated high-affinity chitin-binding protein. The protein is Chitin-inducible gibberellin-responsive protein 2 (CIGR2) of Oryza sativa subsp. japonica (Rice).